Reading from the N-terminus, the 768-residue chain is Solabiose phosphorylase (768 aa).

D456 acts as the Proton donor in catalysis.

The protein belongs to the glycosyl hydrolase 94 family.

The enzyme catalyses solabiose + phosphate = D-galactose + alpha-D-glucose 1-phosphate. Functionally, catalyzes the reversible phosphorolysis of solabiose. Catalyzes the phosphorolysis and synthesis of solabiose through a sequential bi-bi mechanism involving the formation of a ternary complex. Is probably involved in the metabolism of solabiose released from solabiose-containing compounds. The polypeptide is Solabiose phosphorylase (Paenibacillus borealis).